Reading from the N-terminus, the 488-residue chain is Probable cytosol aminopeptidase (488 aa).

Lysine 251 and aspartate 256 together coordinate Mn(2+). Lysine 263 is a catalytic residue. Residues aspartate 274, aspartate 333, and glutamate 335 each contribute to the Mn(2+) site. Residue arginine 337 is part of the active site.

The protein belongs to the peptidase M17 family. Mn(2+) serves as cofactor.

It localises to the cytoplasm. The enzyme catalyses Release of an N-terminal amino acid, Xaa-|-Yaa-, in which Xaa is preferably Leu, but may be other amino acids including Pro although not Arg or Lys, and Yaa may be Pro. Amino acid amides and methyl esters are also readily hydrolyzed, but rates on arylamides are exceedingly low.. It carries out the reaction Release of an N-terminal amino acid, preferentially leucine, but not glutamic or aspartic acids.. In terms of biological role, presumably involved in the processing and regular turnover of intracellular proteins. Catalyzes the removal of unsubstituted N-terminal amino acids from various peptides. The sequence is that of Probable cytosol aminopeptidase from Cenarchaeum symbiosum (strain A).